The chain runs to 269 residues: Adenosylcobinamide-GDP ribazoletransferase (269 aa).

6 helical membrane-spanning segments follow: residues 63–83 (SAYY…LLYL), 87–107 (LPPG…TGML), 137–157 (VGAF…SLLG), 158–178 (AGLP…VVLM), 202–222 (LAFL…AALV), and 246–266 (VYGL…GWGF).

It belongs to the CobS family. Mg(2+) is required as a cofactor.

Its subcellular location is the cell membrane. The enzyme catalyses alpha-ribazole + adenosylcob(III)inamide-GDP = adenosylcob(III)alamin + GMP + H(+). It catalyses the reaction alpha-ribazole 5'-phosphate + adenosylcob(III)inamide-GDP = adenosylcob(III)alamin 5'-phosphate + GMP + H(+). It participates in cofactor biosynthesis; adenosylcobalamin biosynthesis; adenosylcobalamin from cob(II)yrinate a,c-diamide: step 7/7. In terms of biological role, joins adenosylcobinamide-GDP and alpha-ribazole to generate adenosylcobalamin (Ado-cobalamin). Also synthesizes adenosylcobalamin 5'-phosphate from adenosylcobinamide-GDP and alpha-ribazole 5'-phosphate. This chain is Adenosylcobinamide-GDP ribazoletransferase, found in Deinococcus radiodurans (strain ATCC 13939 / DSM 20539 / JCM 16871 / CCUG 27074 / LMG 4051 / NBRC 15346 / NCIMB 9279 / VKM B-1422 / R1).